A 418-amino-acid polypeptide reads, in one-letter code: Hydroxysteroid dehydrogenase-like protein 2 (418 aa).

NADP(+) contacts are provided by residues 17 to 23 (GASRGIG), Lys-42, and Asp-74. Lys-42 is modified (N6-(2-hydroxyisobutyryl)lysine). Lys-116 is subject to N6-acetyllysine. The active-site Proton acceptor is the Tyr-168. Lys-172 contacts NADP(+). The 110-residue stretch at 306–415 (RSGAVEETFR…KLEKLMNQMN (110 aa)) folds into the SCP2 domain. Residue Lys-318 is modified to N6-succinyllysine.

Belongs to the short-chain dehydrogenases/reductases (SDR) family.

Its subcellular location is the peroxisome. It is found in the mitochondrion. Its function is as follows. Has apparently no steroid dehydrogenase activity. Controls bile acid (BA) and lipid metabolism in response to nutritional cues. This Bos taurus (Bovine) protein is Hydroxysteroid dehydrogenase-like protein 2 (HSDL2).